A 193-amino-acid chain; its full sequence is MIEKFLELGVVKFGIFRLSSGLESPFYIDLRNVLGEPELLRWVIEQYREILLRLKFDIIVGVATGGIPYASILGYTLGKPISYVRPEAKEHGTGRLIEGAEVSGREVVVIDDVLTTGKSIIGAINAIRSAGGIVAGAVVFLDREQCGSRNIKTATGVEVYSVYKMRGLLDRLKDYIDEEQYRSVINYLAQWRC.

5-phospho-alpha-D-ribose 1-diphosphate is bound by residues arginine 85, lysine 89, histidine 91, and 111-119 (DDVLTTGKS). Residues threonine 115 and arginine 143 each coordinate orotate.

The protein belongs to the purine/pyrimidine phosphoribosyltransferase family. PyrE subfamily. As to quaternary structure, homodimer. Requires Mg(2+) as cofactor.

The catalysed reaction is orotidine 5'-phosphate + diphosphate = orotate + 5-phospho-alpha-D-ribose 1-diphosphate. It functions in the pathway pyrimidine metabolism; UMP biosynthesis via de novo pathway; UMP from orotate: step 1/2. Its function is as follows. Catalyzes the transfer of a ribosyl phosphate group from 5-phosphoribose 1-diphosphate to orotate, leading to the formation of orotidine monophosphate (OMP). The polypeptide is Orotate phosphoribosyltransferase (Pyrobaculum islandicum (strain DSM 4184 / JCM 9189 / GEO3)).